Reading from the N-terminus, the 399-residue chain is Elongation factor Tu (399 aa).

The 200-residue stretch at 10-209 folds into the tr-type G domain; that stretch reads KPHVNIGTIG…AVDSYIPTPK (200 aa). Residues 19–26 form a G1 region; that stretch reads GHVDHGKT. 19–26 serves as a coordination point for GTP; the sequence is GHVDHGKT. Position 26 (threonine 26) interacts with Mg(2+). Positions 60-64 are G2; it reads GITIA. The segment at 81-84 is G3; that stretch reads DCPG. GTP-binding positions include 81–85 and 136–139; these read DCPGH and NKTD. The tract at residues 136-139 is G4; the sequence is NKTD. Residues 174–176 form a G5 region; it reads SAL.

The protein belongs to the TRAFAC class translation factor GTPase superfamily. Classic translation factor GTPase family. EF-Tu/EF-1A subfamily. Monomer.

The protein localises to the cytoplasm. The catalysed reaction is GTP + H2O = GDP + phosphate + H(+). In terms of biological role, GTP hydrolase that promotes the GTP-dependent binding of aminoacyl-tRNA to the A-site of ribosomes during protein biosynthesis. The sequence is that of Elongation factor Tu from Campylobacter hominis (strain ATCC BAA-381 / DSM 21671 / CCUG 45161 / LMG 19568 / NCTC 13146 / CH001A).